We begin with the raw amino-acid sequence, 534 residues long: Chaperonin GroEL, chloroplastic (534 aa).

ATP-binding positions include 29 to 32, 86 to 90, G414, and D496; these read TLGP and DGTTT.

This sequence belongs to the chaperonin (HSP60) family. In terms of assembly, forms a cylinder of 14 subunits composed of two heptameric rings stacked back-to-back. Interacts with the co-chaperonin GroES.

Its subcellular location is the plastid. It is found in the chloroplast. The enzyme catalyses ATP + H2O + a folded polypeptide = ADP + phosphate + an unfolded polypeptide.. Together with its co-chaperonin GroES, plays an essential role in assisting protein folding. The GroEL-GroES system forms a nano-cage that allows encapsulation of the non-native substrate proteins and provides a physical environment optimized to promote and accelerate protein folding. The polypeptide is Chaperonin GroEL, chloroplastic (Galdieria sulphuraria (Red alga)).